A 255-amino-acid chain; its full sequence is Type III pantothenate kinase (255 aa).

6–13 provides a ligand contact to ATP; the sequence is DVGNTNTV. Substrate-binding positions include Tyr100 and 107-110; that span reads GADR. Residue Asp109 is the Proton acceptor of the active site. Asp129 is a binding site for K(+). Residue Thr132 participates in ATP binding. Position 184 (Thr184) interacts with substrate.

It belongs to the type III pantothenate kinase family. In terms of assembly, homodimer. It depends on NH4(+) as a cofactor. The cofactor is K(+).

It localises to the cytoplasm. The catalysed reaction is (R)-pantothenate + ATP = (R)-4'-phosphopantothenate + ADP + H(+). It functions in the pathway cofactor biosynthesis; coenzyme A biosynthesis; CoA from (R)-pantothenate: step 1/5. Functionally, catalyzes the phosphorylation of pantothenate (Pan), the first step in CoA biosynthesis. This is Type III pantothenate kinase from Syntrophomonas wolfei subsp. wolfei (strain DSM 2245B / Goettingen).